Reading from the N-terminus, the 391-residue chain is mRNA-capping enzyme subunit alpha (391 aa).

Residue Lys-63 is the N6-GMP-lysine intermediate of the active site. A disordered region spans residues 363–391; the sequence is KERNRRPRDEDRKRVGGDDHDHGAKRARQ.

It belongs to the eukaryotic GTase family. In terms of assembly, heterodimer. The mRNA-capping enzyme is composed of two separate chains alpha and beta, respectively a mRNA guanylyltransferase and an mRNA 5'-triphosphate monophosphatase.

The protein localises to the nucleus. It carries out the reaction a 5'-end diphospho-ribonucleoside in mRNA + GTP + H(+) = a 5'-end (5'-triphosphoguanosine)-ribonucleoside in mRNA + diphosphate. Its function is as follows. Second step of mRNA capping. Transfer of the GMP moiety of GTP to the 5'-end of RNA via an enzyme-GMP covalent reaction intermediate. This chain is mRNA-capping enzyme subunit alpha (CEG1), found in Yarrowia lipolytica (strain CLIB 122 / E 150) (Yeast).